The primary structure comprises 302 residues: Proline dehydrogenase 1 (302 aa).

K95 is a binding site for substrate. D129 is a catalytic residue. The FAD site is built by M130 and Q158. R179 is an active-site residue. Residues 182 to 184 and 221 to 222 contribute to the FAD site; these read KGA and TH. 283–284 serves as a coordination point for substrate; it reads RR.

This sequence belongs to the proline oxidase family. FAD serves as cofactor.

It carries out the reaction L-proline + a quinone = (S)-1-pyrroline-5-carboxylate + a quinol + H(+). Its pathway is amino-acid degradation; L-proline degradation into L-glutamate; L-glutamate from L-proline: step 1/2. Functionally, converts proline to delta-1-pyrroline-5-carboxylate. This chain is Proline dehydrogenase 1 (fadM), found in Bacillus subtilis subsp. natto.